The following is a 511-amino-acid chain: Lariat debranching enzyme (511 aa).

A divalent metal cation-binding residues include C52, H54, D83, and N128. The interval 168 to 198 (SGIYSHGDVEFSHYERPAFAERDVKSAYHVR) is lariat recognition loop. The a divalent metal cation site is built by H226, H278, and H280. Residues 473-511 (EDDFIIDRGHGSEEPEAKKSRLEEEKKKKKKKIENLKTL) form a disordered region. A compositionally biased stretch (basic and acidic residues) spans 477–498 (IIDRGHGSEEPEAKKSRLEEEK).

Belongs to the lariat debranching enzyme family. Fe(2+) is required as a cofactor. Zn(2+) serves as cofactor. The cofactor is Mn(2+).

The protein resides in the nucleus. Active in presence of diverse metals including Fe(2+), Zn(2+), Mn(2+). Binds two metal cations in two adjacent alpha and beta metal-binding pockets. Functionally, cleaves the 2'-5' phosphodiester linkage at the branch point of lariat intron pre-mRNAs after splicing and converts them into linear molecules that are subsequently degraded. It thereby facilitates ribonucleotide turnover. This is Lariat debranching enzyme (dbr-1) from Caenorhabditis briggsae.